The chain runs to 116 residues: Large ribosomal subunit protein bL20 (116 aa).

This sequence belongs to the bacterial ribosomal protein bL20 family.

Binds directly to 23S ribosomal RNA and is necessary for the in vitro assembly process of the 50S ribosomal subunit. It is not involved in the protein synthesizing functions of that subunit. In Helicobacter pylori (strain ATCC 700392 / 26695) (Campylobacter pylori), this protein is Large ribosomal subunit protein bL20 (rplT).